The sequence spans 165 residues: UPF0303 protein Rleg2_2653 (165 aa).

The protein belongs to the UPF0303 family.

This Rhizobium leguminosarum bv. trifolii (strain WSM2304) protein is UPF0303 protein Rleg2_2653.